Reading from the N-terminus, the 291-residue chain is Small ribosomal subunit protein uS2 (291 aa).

The tract at residues 241-270 (KREPRQINRPVMSSENQAEQQTSVANENVQ) is disordered. A compositionally biased stretch (polar residues) spans 251–270 (VMSSENQAEQQTSVANENVQ).

The protein belongs to the universal ribosomal protein uS2 family.

This Mycoplasma capricolum subsp. capricolum (strain California kid / ATCC 27343 / NCTC 10154) protein is Small ribosomal subunit protein uS2.